A 1530-amino-acid polypeptide reads, in one-letter code: DNA-directed RNA polymerase III subunit RPC1 (1530 aa).

Cysteine 74, cysteine 77, cysteine 84, histidine 87, cysteine 114, cysteine 117, and cysteine 161 together coordinate Zn(2+). Positions 503, 505, and 507 each coordinate Mg(2+). A bridging helix region spans residues 846–858 (PTEFFFHTMAGRE). The span at 992-1001 (EEQESREDAL) shows a compositional bias: basic and acidic residues. Disordered regions lie at residues 992–1016 (EEQE…SRPR) and 1057–1099 (NLLN…SKEG).

Belongs to the RNA polymerase beta' chain family. Component of the RNA polymerase III (Pol III) complex consisting of 17 subunits.

It localises to the nucleus. The enzyme catalyses RNA(n) + a ribonucleoside 5'-triphosphate = RNA(n+1) + diphosphate. Functionally, DNA-dependent RNA polymerase catalyzes the transcription of DNA into RNA using the four ribonucleoside triphosphates as substrates. Largest and catalytic core component of RNA polymerase III which synthesizes small RNAs, such as 5S rRNA and tRNAs. Forms the polymerase active center together with the second largest subunit. A single-stranded DNA template strand of the promoter is positioned within the central active site cleft of Pol III. A bridging helix emanates from RPC1 and crosses the cleft near the catalytic site and is thought to promote translocation of Pol III by acting as a ratchet that moves the RNA-DNA hybrid through the active site by switching from straight to bent conformations at each step of nucleotide addition. The polypeptide is DNA-directed RNA polymerase III subunit RPC1 (Trypanosoma brucei brucei).